Here is a 300-residue protein sequence, read N- to C-terminus: 4-diphosphocytidyl-2-C-methyl-D-erythritol kinase (300 aa).

Lys12 is a catalytic residue. Position 94 to 104 (94 to 104 (PAQAGIGGGSS)) interacts with ATP. Asp136 is an active-site residue.

This sequence belongs to the GHMP kinase family. IspE subfamily.

The catalysed reaction is 4-CDP-2-C-methyl-D-erythritol + ATP = 4-CDP-2-C-methyl-D-erythritol 2-phosphate + ADP + H(+). Its pathway is isoprenoid biosynthesis; isopentenyl diphosphate biosynthesis via DXP pathway; isopentenyl diphosphate from 1-deoxy-D-xylulose 5-phosphate: step 3/6. Its function is as follows. Catalyzes the phosphorylation of the position 2 hydroxy group of 4-diphosphocytidyl-2C-methyl-D-erythritol. This Verminephrobacter eiseniae (strain EF01-2) protein is 4-diphosphocytidyl-2-C-methyl-D-erythritol kinase.